The sequence spans 355 residues: uncharacterized protein (355 aa).

Position 132 to 139 (132 to 139) interacts with ATP; sequence GPPGCGKT.

The protein belongs to the AAA ATPase family.

The protein resides in the mitochondrion. This is an uncharacterized protein from Schizosaccharomyces pombe (strain 972 / ATCC 24843) (Fission yeast).